The sequence spans 525 residues: GMP synthase [glutamine-hydrolyzing] (525 aa).

Residues arginine 9–leucine 207 enclose the Glutamine amidotransferase type-1 domain. Residue cysteine 86 is the Nucleophile of the active site. Active-site residues include histidine 181 and glutamate 183. One can recognise a GMPS ATP-PPase domain in the interval tryptophan 208–arginine 400. Serine 235 to serine 241 provides a ligand contact to ATP.

In terms of assembly, homodimer.

It carries out the reaction XMP + L-glutamine + ATP + H2O = GMP + L-glutamate + AMP + diphosphate + 2 H(+). It functions in the pathway purine metabolism; GMP biosynthesis; GMP from XMP (L-Gln route): step 1/1. Its function is as follows. Catalyzes the synthesis of GMP from XMP. This chain is GMP synthase [glutamine-hydrolyzing], found in Pseudoalteromonas atlantica (strain T6c / ATCC BAA-1087).